The following is a 212-amino-acid chain: Large ribosomal subunit protein uL3 (212 aa).

Residues 130-158 (KRGSMTHGSKNHRLPGSTGAGTTPGRVYP) form a disordered region.

It belongs to the universal ribosomal protein uL3 family. In terms of assembly, part of the 50S ribosomal subunit. Forms a cluster with proteins L14 and L19.

Its function is as follows. One of the primary rRNA binding proteins, it binds directly near the 3'-end of the 23S rRNA, where it nucleates assembly of the 50S subunit. The sequence is that of Large ribosomal subunit protein uL3 from Gloeothece citriformis (strain PCC 7424) (Cyanothece sp. (strain PCC 7424)).